We begin with the raw amino-acid sequence, 66 residues long: Conotoxin PnMLCL-01 (66 aa).

The N-terminal stretch at 1 to 19 (MLCLPVFIILLLLASPAAS) is a signal peptide. A propeptide spanning residues 20–45 (NPLEKRIQSDLIRAALEDADTKNDPR) is cleaved from the precursor. The residue at position 63 (Cys-63) is a Cysteine amide.

It belongs to the conotoxin T superfamily. In terms of processing, contains 2 disulfide bonds that can be either 'C1-C3, C2-C4' or 'C1-C4, C2-C3', since these disulfide connectivities have been observed for conotoxins with cysteine framework V (for examples, see AC P0DQQ7 and AC P81755). Expressed by the venom duct.

The protein resides in the secreted. This chain is Conotoxin PnMLCL-01, found in Conus pennaceus (Feathered cone).